The chain runs to 445 residues: GTPase Der (445 aa).

EngA-type G domains lie at proline 3–glutamine 167 and isoleucine 180–methionine 353. Residues glycine 9–serine 16, aspartate 56–phenylalanine 60, asparagine 119–glutamate 122, glycine 186–serine 193, aspartate 233–leucine 237, and asparagine 298–aspartate 301 each bind GTP. Residues alanine 354–asparagine 438 form the KH-like domain.

This sequence belongs to the TRAFAC class TrmE-Era-EngA-EngB-Septin-like GTPase superfamily. EngA (Der) GTPase family. Associates with the 50S ribosomal subunit.

In terms of biological role, GTPase that plays an essential role in the late steps of ribosome biogenesis. The chain is GTPase Der from Burkholderia cenocepacia (strain HI2424).